The primary structure comprises 294 residues: Probable ABC transporter permease protein YqgI (294 aa).

6 helical membrane passes run 14 to 34, 66 to 86, 99 to 121, 126 to 148, 190 to 210, and 260 to 280; these read FGLC…YIII, FYIL…GGVF, FIRT…FGLL, LTGW…LPVM, IITG…ALLF, and AIAN…NLAA. The 219-residue stretch at 62 to 280 folds into the ABC transmembrane type-1 domain; sequence LFNSFYILFI…ISVLVFNLAA (219 aa).

It belongs to the binding-protein-dependent transport system permease family. CysTW subfamily.

Its subcellular location is the cell membrane. In terms of biological role, part of the binding-protein-dependent transport system YqgGHIJK. Probably responsible for the translocation of the substrate across the membrane. The protein is Probable ABC transporter permease protein YqgI (yqgI) of Bacillus subtilis (strain 168).